A 310-amino-acid chain; its full sequence is 2-dehydro-3-deoxygluconokinase (310 aa).

Substrate-binding positions include 29 to 33 (GDTLN), Tyr89, 103 to 105 (YWR), and Arg171. Residues 169–171 (NYR), 229–234 (KRGADA), and 262–265 (AAGD) contribute to the ATP site. Substrate is bound at residue Asp265. The active-site Proton acceptor is Asp265.

Belongs to the carbohydrate kinase PfkB family.

The enzyme catalyses 2-dehydro-3-deoxy-D-gluconate + ATP = 2-dehydro-3-deoxy-6-phospho-D-gluconate + ADP + H(+). It functions in the pathway carbohydrate acid metabolism; 2-dehydro-3-deoxy-D-gluconate degradation; D-glyceraldehyde 3-phosphate and pyruvate from 2-dehydro-3-deoxy-D-gluconate: step 1/2. Catalyzes the phosphorylation of 2-keto-3-deoxygluconate (KDG) to produce 2-keto-3-deoxy-6-phosphogluconate (KDPG). The protein is 2-dehydro-3-deoxygluconokinase of Dickeya dadantii (strain 3937) (Erwinia chrysanthemi (strain 3937)).